Here is a 346-residue protein sequence, read N- to C-terminus: MSNSINPIVWQEDCVLLVDQTLLPLAYKVVEIKTYQAMAEAIRTMIVRGAPAIGVSAAYGLYLGAKEIQTTDRTIFLEKLEAIAATLRQTRPTAVNLFWAIDRVMATVQGATGNIPELQNLILNTAKAIHNEDLATCQAIGDQGLAVLPETPEKLTILTHCNAGGLATAGYGTALGVIRSAWRENRLGMVYADETRPRLQGSKLTTWECVQEGIPVTQICDNMAAHCMQQGRIDAVVVGADRITANGDAANKIGTYSLAIVAKAHNVPFFVAAPLSTVDFSLSDGKQIPIEERDPKEVYQIGDTRICPEGVQFYNPAFDVTPAHLITAIITEKGAVAPDQLIHLKG.

Residues 48–50 (RGA), R91, and Q200 contribute to the substrate site. The active-site Proton donor is D241. 251–252 (NK) contacts substrate.

The protein belongs to the eIF-2B alpha/beta/delta subunits family. MtnA subfamily.

It carries out the reaction 5-(methylsulfanyl)-alpha-D-ribose 1-phosphate = 5-(methylsulfanyl)-D-ribulose 1-phosphate. Its pathway is amino-acid biosynthesis; L-methionine biosynthesis via salvage pathway; L-methionine from S-methyl-5-thio-alpha-D-ribose 1-phosphate: step 1/6. Its function is as follows. Catalyzes the interconversion of methylthioribose-1-phosphate (MTR-1-P) into methylthioribulose-1-phosphate (MTRu-1-P). This Picosynechococcus sp. (strain ATCC 27264 / PCC 7002 / PR-6) (Agmenellum quadruplicatum) protein is Methylthioribose-1-phosphate isomerase.